Consider the following 302-residue polypeptide: MPASGAGYAGGSIVPDGRTLVNCRDLHKARDAYQLRDIEATRAAHSLDLYRELTGDHKENHTNTSSDYVKAVVFGGLDGIVTIFAIVAGCVGADLSCSQVLMVGLGNLLADAISMGFGEYVSAAAEKDFVEAEKQREEWEVENCPEEEKREMVEIYTEKYGFSRADAQSMVDITFKYKKFFVQHMMVEELGLMYGFDEPTPIKRGLVMFTAFCFFGLLPLAGFIGWVAAFGLGAEADMAFLMACVVSIMTLFILGFSKGKFVGQNPTKSACLMAMNGGCAGTVAYGVGSLLQLVVGANLTAA.

The Cytoplasmic portion of the chain corresponds to 1-70 (MPASGAGYAG…HTNTSSDYVK (70 aa)). A helical transmembrane segment spans residues 71 to 91 (AVVFGGLDGIVTIFAIVAGCV). Residues 92–99 (GADLSCSQ) are Vacuolar-facing. The chain crosses the membrane as a helical span at residues 100–120 (VLMVGLGNLLADAISMGFGEY). At 121–211 (VSAAAEKDFV…IKRGLVMFTA (91 aa)) the chain is on the cytoplasmic side. Fe cation contacts are provided by Glu-137, Glu-140, Glu-148, Glu-151, Met-185, and Glu-189. Residues 212 to 232 (FCFFGLLPLAGFIGWVAAFGL) traverse the membrane as a helical segment. Over 233-235 (GAE) the chain is Vacuolar. Residues 236-256 (ADMAFLMACVVSIMTLFILGF) traverse the membrane as a helical segment. The Cytoplasmic portion of the chain corresponds to 257 to 276 (SKGKFVGQNPTKSACLMAMN). The helical transmembrane segment at 277 to 297 (GGCAGTVAYGVGSLLQLVVGA) threads the bilayer. Residues 298–302 (NLTAA) are Vacuolar-facing.

Belongs to the CCC1 family.

It is found in the vacuole membrane. The catalysed reaction is Fe(2+)(in) = Fe(2+)(out). Vacuolar iron transporter involved in the transfer of iron ions from the cytosol to the vacuole for intracellular iron storage. Plays an essential role in detoxification of excess iron. Important for parasite survival within macrophages and parasite virulence in vivo. The chain is Vacuolar iron transporter from Toxoplasma gondii (strain ATCC 50861 / VEG).